Consider the following 49-residue polypeptide: Unknown protein from spot 75 of 2D-PAGE of etiolated coleoptile (49 aa).

The chain is Unknown protein from spot 75 of 2D-PAGE of etiolated coleoptile from Zea mays (Maize).